A 212-amino-acid chain; its full sequence is Large ribosomal subunit protein bL25 (212 aa).

The segment at 1-25 is disordered; sequence MSQSTIHKIAVKKRTETGKNENNRL. The segment covering 13–24 has biased composition (basic and acidic residues); it reads KRTETGKNENNR.

This sequence belongs to the bacterial ribosomal protein bL25 family. CTC subfamily. In terms of assembly, part of the 50S ribosomal subunit; part of the 5S rRNA/L5/L18/L25 subcomplex. Contacts the 5S rRNA. Binds to the 5S rRNA independently of L5 and L18.

Functionally, this is one of the proteins that binds to the 5S RNA in the ribosome where it forms part of the central protuberance. The polypeptide is Large ribosomal subunit protein bL25 (Leptospira borgpetersenii serovar Hardjo-bovis (strain JB197)).